Here is a 147-residue protein sequence, read N- to C-terminus: uncharacterized protein (147 aa).

2 consecutive transmembrane segments (helical) span residues 21-41 (LMLW…IVFV) and 67-87 (ALFG…SIPL).

Its subcellular location is the cell membrane. This is an uncharacterized protein from Ureaplasma parvum serovar 3 (strain ATCC 700970).